We begin with the raw amino-acid sequence, 1187 residues long: Non-receptor tyrosine-protein kinase TYK2 (1187 aa).

The FERM domain occupies 26–431; that stretch reads GGLKVLLHWA…GYFRLTADSS (406 aa). The residue at position 292 (Tyr-292) is a Phosphotyrosine. A disordered region spans residues 335-366; that stretch reads KEEGSSGSSGRNPQASLFGKKAKAHKAVGQPA. Positions 339-349 are enriched in polar residues; it reads SSGSSGRNPQA. In terms of domain architecture, SH2; atypical spans 450–529; that stretch reads GIHGPLLEPF…GRSFPSVREL (80 aa). 2 positions are modified to phosphoserine: Ser-499 and Ser-525. The Protein kinase 1 domain maps to 589–875; it reads ITQLSHLGQG…LTRLQPHNLA (287 aa). At Tyr-604 the chain carries Phosphotyrosine. Residues 610 to 629 form a disordered region; it reads VEGSGDPEEGKMDDEDPLVP. Positions 614–626 are enriched in acidic residues; that stretch reads GDPEEGKMDDEDP. Residue Ser-884 is modified to Phosphoserine. Residues 897-1176 enclose the Protein kinase 2 domain; sequence LKKIRDLGEG…PILKTVHEKY (280 aa). ATP is bound by residues 903–911 and Lys-930; that span reads LGEGHFGKV. Asp-1023 acts as the Proton acceptor in catalysis. Phosphotyrosine; by autocatalysis is present on Tyr-1054. Residue Tyr-1055 is modified to Phosphotyrosine.

This sequence belongs to the protein kinase superfamily. Tyr protein kinase family. JAK subfamily. As to quaternary structure, interacts (via FERM domain) with JAKMIP1. Interacts with PIK3R1; this interaction is important for cell migration. Interacts with MPL/TPOR. (Microbial infection) Interacts with Epstein-Barr virus protein LMP1; this interaction inhibits TYK2-mediated interferon signaling. In terms of assembly, (Microbial infection) Interacts with papillomavirus-18 protein E6; this interaction impairs JAK-STAT activation by interferon-alpha. As to quaternary structure, (Microbial infection) Interacts with Epstein-Barr virus (EBV) tegument protein BGLF2; this interaction participates in the inhibition of type I IFN signaling by the virus. Post-translationally, phosphorylated. Phosphorylation by JAK1 at Tyr-1054 and Tyr-1055 induces kinase activation. In terms of tissue distribution, observed in all cell lines analyzed. Expressed in a variety of lymphoid and non-lymphoid cell lines.

The catalysed reaction is L-tyrosyl-[protein] + ATP = O-phospho-L-tyrosyl-[protein] + ADP + H(+). The protein kinase 1 domain (also termed pseudokinase domain) mediates autoinhibition of the TYK2 kinase domain. Tyrosine kinase of the non-receptor type involved in numerous cytokines and interferons signaling, which regulates cell growth, development, cell migration, innate and adaptive immunity. Plays both structural and catalytic roles in numerous interleukins and interferons (IFN-alpha/beta) signaling. Associates with heterodimeric cytokine receptor complexes and activates STAT family members including STAT1, STAT3, STAT4 or STAT6. The heterodimeric cytokine receptor complexes are composed of (1) a TYK2-associated receptor chain (IFNAR1, IL12RB1, IL10RB or IL13RA1), and (2) a second receptor chain associated either with JAK1 or JAK2. In response to cytokine-binding to receptors, phosphorylates and activates receptors (IFNAR1, IL12RB1, IL10RB or IL13RA1), creating docking sites for STAT members. In turn, recruited STATs are phosphorylated by TYK2 (or JAK1/JAK2 on the second receptor chain), form homo- and heterodimers, translocate to the nucleus, and regulate cytokine/growth factor responsive genes. Negatively regulates STAT3 activity by promototing phosphorylation at a specific tyrosine that differs from the site used for signaling. This chain is Non-receptor tyrosine-protein kinase TYK2 (TYK2), found in Homo sapiens (Human).